The following is a 101-amino-acid chain: Small ribosomal subunit protein uS14 (101 aa).

This sequence belongs to the universal ribosomal protein uS14 family. In terms of assembly, part of the 30S ribosomal subunit. Contacts proteins S3 and S10.

Its function is as follows. Binds 16S rRNA, required for the assembly of 30S particles and may also be responsible for determining the conformation of the 16S rRNA at the A site. The polypeptide is Small ribosomal subunit protein uS14 (Pasteurella multocida (strain Pm70)).